A 147-amino-acid polypeptide reads, in one-letter code: Small ribosomal subunit protein bS16 (147 aa).

The disordered stretch occupies residues 89–147 (AWTHGNNPKKAEPGKKAQERAKERADKAEAKAAAAAEAAAAPAEEAPAEAAPAEETSES). Basic and acidic residues predominate over residues 97–118 (KKAEPGKKAQERAKERADKAEA). The segment covering 119 to 147 (KAAAAAEAAAAPAEEAPAEAAPAEETSES) has biased composition (low complexity).

This sequence belongs to the bacterial ribosomal protein bS16 family.

The protein is Small ribosomal subunit protein bS16 of Hyphomonas neptunium (strain ATCC 15444).